Consider the following 450-residue polypeptide: Ig mu chain C region (450 aa).

This is Ig mu chain C region from Canis lupus familiaris (Dog).